The primary structure comprises 211 residues: Porin MspA (211 aa).

A signal peptide spans 1 to 27; sequence MKAISRVLIAMVAAIAALFTSTGTSHA.

Belongs to the mycobacterial porin (TC 1.B.24) family. Forms very stable octamers. Isolated as a 100 kDa complex that can be reduced to monomers upon boiling in 80% dimethyl sulfoxide for 15 minutes. Structures show a goblet with the wide end on the exterior of the outer membrane and a central channel. It is not known if mixed oligomers of MspA with other Msp subunits form in vivo.

It localises to the cell outer membrane. The protein resides in the secreted. The protein localises to the cell wall. The major porin in this organism, forms a water-filled channel which favors the permeation of cations, amino acids, iron Fe(3+) and less efficiently phosphate. Does not transport Fe-ExoMS, the predominant siderophore. Plays a role in transport of beta-lactamase and hydrophilic fluoroquinolone antibiotics such as norfloxacin as well as chloramphenicol. There are about 2400 porins in wild-type, 800 in an mspA deletion and 150 in a double mspA-mspC deletion. Different conductance values with maxima at 2.3 and 4.6 nanosiemens might be caused by a simultaneous reconstitution of MspA channels into the membrane or by the existence of different MspA conformations. The polypeptide is Porin MspA (mspA) (Mycolicibacterium smegmatis (strain ATCC 700084 / mc(2)155) (Mycobacterium smegmatis)).